Reading from the N-terminus, the 208-residue chain is Adenylyl-sulfate kinase (208 aa).

Residue 35 to 42 coordinates ATP; the sequence is GLSGSGKS. Ser-109 serves as the catalytic Phosphoserine intermediate.

Belongs to the APS kinase family.

It catalyses the reaction adenosine 5'-phosphosulfate + ATP = 3'-phosphoadenylyl sulfate + ADP + H(+). It functions in the pathway sulfur metabolism; hydrogen sulfide biosynthesis; sulfite from sulfate: step 2/3. Functionally, catalyzes the synthesis of activated sulfate. The protein is Adenylyl-sulfate kinase of Geotalea uraniireducens (strain Rf4) (Geobacter uraniireducens).